The following is a 204-amino-acid chain: FMN-dependent NADH:quinone oxidoreductase (204 aa).

FMN contacts are provided by residues Ser10 and 16 to 18 (SKS).

Belongs to the azoreductase type 1 family. Homodimer. It depends on FMN as a cofactor.

It carries out the reaction 2 a quinone + NADH + H(+) = 2 a 1,4-benzosemiquinone + NAD(+). It catalyses the reaction N,N-dimethyl-1,4-phenylenediamine + anthranilate + 2 NAD(+) = 2-(4-dimethylaminophenyl)diazenylbenzoate + 2 NADH + 2 H(+). Quinone reductase that provides resistance to thiol-specific stress caused by electrophilic quinones. Its function is as follows. Also exhibits azoreductase activity. Catalyzes the reductive cleavage of the azo bond in aromatic azo compounds to the corresponding amines. This Ruegeria pomeroyi (strain ATCC 700808 / DSM 15171 / DSS-3) (Silicibacter pomeroyi) protein is FMN-dependent NADH:quinone oxidoreductase.